Consider the following 318-residue polypeptide: Glycine--tRNA ligase alpha subunit (318 aa).

It belongs to the class-II aminoacyl-tRNA synthetase family. Tetramer of two alpha and two beta subunits.

It is found in the cytoplasm. The catalysed reaction is tRNA(Gly) + glycine + ATP = glycyl-tRNA(Gly) + AMP + diphosphate. The sequence is that of Glycine--tRNA ligase alpha subunit from Methylibium petroleiphilum (strain ATCC BAA-1232 / LMG 22953 / PM1).